A 150-amino-acid chain; its full sequence is Ubiquitin-conjugating enzyme E2 3 (150 aa).

The UBC core domain maps to 4 to 150 (PAKKRLMWDF…VIEIVEQSYV (147 aa)). The Glycyl thioester intermediate role is filled by cysteine 88.

The protein belongs to the ubiquitin-conjugating enzyme family. Expressed in all tissues examined. Lower levels found in leaves.

It carries out the reaction S-ubiquitinyl-[E1 ubiquitin-activating enzyme]-L-cysteine + [E2 ubiquitin-conjugating enzyme]-L-cysteine = [E1 ubiquitin-activating enzyme]-L-cysteine + S-ubiquitinyl-[E2 ubiquitin-conjugating enzyme]-L-cysteine.. It functions in the pathway protein modification; protein ubiquitination. Accepts the ubiquitin from the E1 complex and catalyzes its covalent attachment to other proteins. The protein is Ubiquitin-conjugating enzyme E2 3 (UBC3) of Arabidopsis thaliana (Mouse-ear cress).